A 309-amino-acid chain; its full sequence is Protein FdhE homolog (309 aa).

The protein belongs to the FdhE family.

It is found in the cytoplasm. Its function is as follows. Necessary for formate dehydrogenase activity. The sequence is that of Protein FdhE homolog from Pasteurella multocida (strain Pm70).